The sequence spans 168 residues: Mediator of RNA polymerase II transcription subunit 7b (168 aa).

Residues 1–12 (MATATYPPPPPY) are compositionally biased toward pro residues. The disordered stretch occupies residues 1-33 (MATATYPPPPPYYRLYKDFSENTDSAPEPPPPI). Coiled-coil stretches lie at residues 64-92 (KDSN…ADVL) and 132-162 (IMEL…KDAF).

The protein belongs to the Mediator complex subunit 7 family. In terms of assembly, component of the Mediator complex. Interacts with MEE14/CBP1.

The protein resides in the nucleus. Component of the Mediator complex, a coactivator involved in the regulated transcription of nearly all RNA polymerase II-dependent genes. Mediator functions as a bridge to convey information from gene-specific regulatory proteins to the basal RNA polymerase II transcription machinery. The Mediator complex, having a compact conformation in its free form, is recruited to promoters by direct interactions with regulatory proteins and serves for the assembly of a functional pre-initiation complex with RNA polymerase II and the general transcription factors. The sequence is that of Mediator of RNA polymerase II transcription subunit 7b (MED7B) from Arabidopsis thaliana (Mouse-ear cress).